The sequence spans 188 residues: uncharacterized protein (188 aa).

An N-terminal signal peptide occupies residues 1–23; sequence MVRPKLAFYILPLLLAFLGSALG. N74 is a glycosylation site (N-linked (GlcNAc...) asparagine).

This is an uncharacterized protein from Mus musculus (Mouse).